A 1496-amino-acid chain; its full sequence is Chromosome partition protein MukB (1496 aa).

63-70 (GGNGAGKS) is an ATP binding site. Coiled-coil stretches lie at residues 328 to 493 (KLEL…QRLS) and 536 to 632 (KMQA…APAW). The interval 694 to 811 (PDGSDDVRLN…EVPLFGRAAR (118 aa)) is flexible hinge. 2 coiled-coil regions span residues 861 to 1171 (NPEE…SAEE) and 1235 to 1291 (IDAI…LQNI). Basic and acidic residues predominate over residues 1082 to 1091 (RARSRRDELQ). The segment at 1082–1101 (RARSRRDELQQRLSQQRSRK) is disordered.

It belongs to the SMC family. MukB subfamily. Homodimerization via its hinge domain. Binds to DNA via its C-terminal region. Interacts, and probably forms a ternary complex, with MukE and MukF via its C-terminal region. The complex formation is stimulated by calcium or magnesium. Interacts with tubulin-related protein FtsZ.

It is found in the cytoplasm. Its subcellular location is the nucleoid. In terms of biological role, plays a central role in chromosome condensation, segregation and cell cycle progression. Functions as a homodimer, which is essential for chromosome partition. Involved in negative DNA supercoiling in vivo, and by this means organize and compact chromosomes. May achieve or facilitate chromosome segregation by condensation DNA from both sides of a centrally located replisome during cell division. The polypeptide is Chromosome partition protein MukB (Actinobacillus pleuropneumoniae serotype 3 (strain JL03)).